The chain runs to 526 residues: Threonine synthase 1, chloroplastic (526 aa).

The transit peptide at Met-1 to Thr-40 directs the protein to the chloroplast. S-adenosyl-L-methionine is bound by residues Pro-142–Gly-144, Ser-165–Phe-167, Asn-172, Leu-173, Lys-181, and Asn-187. Lys-203 carries the post-translational modification N6-(pyridoxal phosphate)lysine. Pyridoxal 5'-phosphate contacts are provided by residues Gly-335–Asn-339 and Thr-472.

It belongs to the threonine synthase family. Homodimer. It depends on pyridoxal 5'-phosphate as a cofactor.

It is found in the plastid. The protein localises to the chloroplast. The catalysed reaction is O-phospho-L-homoserine + H2O = L-threonine + phosphate. It functions in the pathway amino-acid biosynthesis; L-threonine biosynthesis; L-threonine from L-aspartate: step 5/5. With respect to regulation, allosterically activated by S-adenosyl-L-methionine (SAM). Activated by S-adenosyl-L-ethionine, 5'-amino-5'-deoxyadenosine, sinefungin and 5'-deoxy-5-methylthioadenosine. Inhibited by AMP. Functionally, catalyzes the gamma-elimination of phosphate from L-phosphohomoserine and the beta-addition of water to produce L-threonine. The protein is Threonine synthase 1, chloroplastic (TS1) of Arabidopsis thaliana (Mouse-ear cress).